The sequence spans 33 residues: Photosystem II reaction center protein Psb30 (33 aa).

A helical membrane pass occupies residues 5-25 (LIAQLTFLTSIIVSGPLVIAL).

Belongs to the Psb30/Ycf12 family. In terms of assembly, PSII is composed of 1 copy each of membrane proteins PsbA, PsbB, PsbC, PsbD, PsbE, PsbF, PsbH, PsbI, PsbJ, PsbK, PsbL, PsbM, PsbT, PsbX, PsbY, PsbZ, Psb30/Ycf12, peripheral proteins of the oxygen-evolving complex and a large number of cofactors. It forms dimeric complexes.

The protein localises to the plastid. It is found in the chloroplast thylakoid membrane. Functionally, a core subunit of photosystem II (PSII), probably helps stabilize the reaction center. The sequence is that of Photosystem II reaction center protein Psb30 from Psilotum nudum (Whisk fern).